The primary structure comprises 339 residues: DNA-directed RNA polymerase subunit alpha (339 aa).

The interval 1-235 is alpha N-terminal domain (alpha-NTD); the sequence is MTIQKNWQEL…DQLNVFVNFE (235 aa). Residues 251-339 are alpha C-terminal domain (alpha-CTD); that stretch reads FNPAFLKKVD…ELAKRFEDHY (89 aa).

This sequence belongs to the RNA polymerase alpha chain family. As to quaternary structure, homodimer. The RNAP catalytic core consists of 2 alpha, 1 beta, 1 beta' and 1 omega subunit. When a sigma factor is associated with the core the holoenzyme is formed, which can initiate transcription.

It carries out the reaction RNA(n) + a ribonucleoside 5'-triphosphate = RNA(n+1) + diphosphate. Functionally, DNA-dependent RNA polymerase catalyzes the transcription of DNA into RNA using the four ribonucleoside triphosphates as substrates. The chain is DNA-directed RNA polymerase subunit alpha from Rhodopseudomonas palustris (strain BisA53).